A 520-amino-acid chain; its full sequence is Maturase K (520 aa).

Belongs to the intron maturase 2 family. MatK subfamily.

It localises to the plastid. It is found in the chloroplast. Its function is as follows. Usually encoded in the trnK tRNA gene intron. Probably assists in splicing its own and other chloroplast group II introns. The protein is Maturase K of Galanthus elwesii (Giant snowdrop).